The primary structure comprises 204 residues: Nucleoside triphosphate pyrophosphatase (204 aa).

The active-site Proton acceptor is the aspartate 78.

The protein belongs to the Maf family. It depends on a divalent metal cation as a cofactor.

Its subcellular location is the cytoplasm. It carries out the reaction a ribonucleoside 5'-triphosphate + H2O = a ribonucleoside 5'-phosphate + diphosphate + H(+). The catalysed reaction is a 2'-deoxyribonucleoside 5'-triphosphate + H2O = a 2'-deoxyribonucleoside 5'-phosphate + diphosphate + H(+). Functionally, nucleoside triphosphate pyrophosphatase. May have a dual role in cell division arrest and in preventing the incorporation of modified nucleotides into cellular nucleic acids. In Prochlorococcus marinus (strain MIT 9215), this protein is Nucleoside triphosphate pyrophosphatase.